A 47-amino-acid chain; its full sequence is Protein YqgG (47 aa).

The protein is Protein YqgG of Escherichia coli (strain K12).